Consider the following 157-residue polypeptide: N-acetylgalactosamine-specific phosphotransferase enzyme IIB component 2 (157 aa).

Residues 1-157 enclose the PTS EIIB type-4 domain; sequence MPNIVLSRID…EPAVDLFKLL (157 aa). The active-site Pros-phosphohistidine intermediate is H15.

Its subcellular location is the cytoplasm. Its function is as follows. The phosphoenolpyruvate-dependent sugar phosphotransferase system (sugar PTS), a major carbohydrate active -transport system, catalyzes the phosphorylation of incoming sugar substrates concomitantly with their translocation across the cell membrane. This system is involved in N-acetylgalactosamine transport. The polypeptide is N-acetylgalactosamine-specific phosphotransferase enzyme IIB component 2 (agaV) (Escherichia coli (strain K12)).